A 254-amino-acid polypeptide reads, in one-letter code: MPVSRIAVGAPGELSHPDTAKAAVAEFISTLIFVFAGSGSGMAFSKLTDGGAATPAGLIAASLAHALALFVAVSVGANISGGHVNPAVTFGAFVGGNISLLKALVYWVAQLLGSVVACLLLKIATGGAALGAFSLSAGVGAMNAVVLEMVMTFGLVYTVYATAVDPKKGDLGVIAPIAIGFIVGANILAGGAFDGASMNPAVSFGPAVVTGVWENHWVYWVGPLAGAAIAALVYDIIFIGQRPHQQLPTTAADY.

The next 2 helical transmembrane spans lie at 24–44 and 56–76; these read VAEF…GMAF and AGLI…VSVG. The NPA 1 motif lies at 85 to 87; the sequence is NPA. 3 helical membrane passes run 103-123, 144-164, and 173-193; these read ALVY…LLKI, AVVL…ATAV, and VIAP…GGAF. The short motif at 199–201 is the NPA 2 element; that stretch reads NPA. The helical transmembrane segment at 220–240 threads the bilayer; it reads WVGPLAGAAIAALVYDIIFIG.

The protein belongs to the MIP/aquaporin (TC 1.A.8) family. TIP (TC 1.A.8.10) subfamily.

The protein resides in the vacuole membrane. Its function is as follows. Aquaporins facilitate the transport of water and small neutral solutes across cell membranes. The polypeptide is Aquaporin TIP1-2 (TIP1-2) (Zea mays (Maize)).